The chain runs to 261 residues: MLLKRRIGLLLSMVGVFMLLAGCSSVKEPITADSPHFWDKYVVYPLSELITYVAKLTGDNYGLSIILVTILIRLLILPLMIKQLRSSKAMQALQPEMQKLKEKYSSKDQKTQQKLQQETMALFQKHGVNPLAGCFPILIQMPILIGFYHAIMRTQAISEHSFLWFDLGEKDPYYILPIVAGVATFVQQKLMMAGNAQQNPQMAMMLWIMPIMIIVFAINFPAALSLYWVVGNLFMIAQTFLIKGPDIKKNPEPQKAGGKKK.

Positions 1–22 (MLLKRRIGLLLSMVGVFMLLAG) are cleaved as a signal peptide. A lipid anchor (N-palmitoyl cysteine) is attached at C23. C23 carries the S-diacylglycerol cysteine lipid modification. 5 helical membrane passes run 61-81 (YGLS…PLMI), 131-151 (LAGC…YHAI), 174-194 (YILP…MMAG), 204-224 (MMLW…PAAL), and 225-245 (SLYW…IKGP).

This sequence belongs to the OXA1/ALB3/YidC family. Type 2 subfamily. Mostly monomeric, it may also form dimers. Interacts with SpoIIIAE. Forms a complex with the F(1)F(0) ATP synthase in which can be found the alpha, beta, gamma, delta and epsilon subunits of F(1) and a, b and subunits of F(0). YqgA is found in the same complex.

It localises to the cell membrane. Functionally, required for the insertion and/or proper folding and/or complex formation of integral membrane proteins into the membrane. Involved in integration of membrane proteins that insert both dependently and independently of the Sec translocase complex, as well as at least some lipoproteins. Also involved in protein secretion processes. Essential for sporulation by activating sigma factor SpoIIIG/SigG after engulfment is completed in the prespore, maybe by acting on SpoIIIAE. It has an overlapping, although partly distinct, function compared to YqjG(MisCB). The polypeptide is Membrane protein insertase MisCA (misCA) (Bacillus subtilis (strain 168)).